The primary structure comprises 152 residues: Deoxyuridine 5'-triphosphate nucleotidohydrolase (152 aa).

Residues 71–73 (RSG), Asn84, 88–90 (LVD), and Met98 contribute to the substrate site.

The protein belongs to the dUTPase family. Mg(2+) is required as a cofactor.

It carries out the reaction dUTP + H2O = dUMP + diphosphate + H(+). The protein operates within pyrimidine metabolism; dUMP biosynthesis; dUMP from dCTP (dUTP route): step 2/2. Its function is as follows. This enzyme is involved in nucleotide metabolism: it produces dUMP, the immediate precursor of thymidine nucleotides and it decreases the intracellular concentration of dUTP so that uracil cannot be incorporated into DNA. This Shewanella oneidensis (strain ATCC 700550 / JCM 31522 / CIP 106686 / LMG 19005 / NCIMB 14063 / MR-1) protein is Deoxyuridine 5'-triphosphate nucleotidohydrolase.